The following is a 757-amino-acid chain: Elongation factor G, mitochondrial (757 aa).

The transit peptide at Met1–Arg39 directs the protein to the mitochondrion. A tr-type G domain is found at Gln65–Ser346. GTP-binding positions include Ala74 to Thr81, Asp145 to His149, and Asn199 to Asp202.

This sequence belongs to the TRAFAC class translation factor GTPase superfamily. Classic translation factor GTPase family. EF-G/EF-2 subfamily.

The protein localises to the mitochondrion. It participates in protein biosynthesis; polypeptide chain elongation. In terms of biological role, mitochondrial GTPase that catalyzes the GTP-dependent ribosomal translocation step during translation elongation. During this step, the ribosome changes from the pre-translocational (PRE) to the post-translocational (POST) state as the newly formed A-site-bound peptidyl-tRNA and P-site-bound deacylated tRNA move to the P and E sites, respectively. Catalyzes the coordinated movement of the two tRNA molecules, the mRNA and conformational changes in the ribosome. This is Elongation factor G, mitochondrial from Candida glabrata (strain ATCC 2001 / BCRC 20586 / JCM 3761 / NBRC 0622 / NRRL Y-65 / CBS 138) (Yeast).